A 279-amino-acid chain; its full sequence is Diaminopimelate epimerase (279 aa).

Positions 14 and 68 each coordinate substrate. The Proton donor role is filled by cysteine 77. Residues 78–79 (GN), asparagine 191, and 207–208 (ER) each bind substrate. Cysteine 217 functions as the Proton acceptor in the catalytic mechanism. 218–219 (GT) is a binding site for substrate.

The protein belongs to the diaminopimelate epimerase family. As to quaternary structure, homodimer.

The protein localises to the cytoplasm. The enzyme catalyses (2S,6S)-2,6-diaminopimelate = meso-2,6-diaminopimelate. It participates in amino-acid biosynthesis; L-lysine biosynthesis via DAP pathway; DL-2,6-diaminopimelate from LL-2,6-diaminopimelate: step 1/1. Functionally, catalyzes the stereoinversion of LL-2,6-diaminopimelate (L,L-DAP) to meso-diaminopimelate (meso-DAP), a precursor of L-lysine. The chain is Diaminopimelate epimerase from Methanothrix thermoacetophila (strain DSM 6194 / JCM 14653 / NBRC 101360 / PT) (Methanosaeta thermophila).